A 539-amino-acid polypeptide reads, in one-letter code: Alpha-aminoadipic semialdehyde dehydrogenase (539 aa).

Residues 1–26 constitute a mitochondrion transit peptide; it reads MLRLARPLCVQTVKASKLSRLWSRPA. N6-acetyllysine; alternate is present on residues K86, K94, and K97. N6-succinyllysine; alternate occurs at positions 86, 94, and 97. NAD(+)-binding positions include 192–194, K218, 258–259, 274–275, 274–279, and 296–297; these read TAF, GT, GS, GSTQVG, and EL. E296 acts as the Proton acceptor in catalysis. C330 acts as the Nucleophile in catalysis. Residue T331 coordinates (S)-2-amino-6-oxohexanoate. E427 is a binding site for NAD(+). N6-acetyllysine is present on K462. (S)-2-amino-6-oxohexanoate is bound by residues G489 and A490. K500 bears the N6-acetyllysine mark. Position 537 is an N6-succinyllysine (K537).

This sequence belongs to the aldehyde dehydrogenase family. In terms of assembly, homotetramer. Abundant in kidney, liver, cochlea and outer hair cells but not inner hair cells or vestibular type I hair cells. Very low levels in lung, brain, intestine and pancreas.

Its subcellular location is the cytoplasm. It is found in the cytosol. It localises to the nucleus. The protein localises to the mitochondrion. The catalysed reaction is nonanal + NAD(+) + H2O = nonanoate + NADH + 2 H(+). The enzyme catalyses (S)-2-amino-6-oxohexanoate + NAD(+) + H2O = L-2-aminoadipate + NADH + 2 H(+). It catalyses the reaction betaine aldehyde + NAD(+) + H2O = glycine betaine + NADH + 2 H(+). It carries out the reaction an aldehyde + NAD(+) + H2O = a carboxylate + NADH + 2 H(+). The catalysed reaction is hexanal + NAD(+) + H2O = hexanoate + NADH + 2 H(+). The enzyme catalyses octanal + NAD(+) + H2O = octanoate + NADH + 2 H(+). It catalyses the reaction (E)-non-2-enal + NAD(+) + H2O = (E)-non-2-enoate + NADH + 2 H(+). It carries out the reaction (E)-4-hydroxynon-2-enal + NAD(+) + H2O = (E)-4-hydroxynon-2-enoate + NADH + 2 H(+). It participates in amine and polyamine biosynthesis; betaine biosynthesis via choline pathway; betaine from betaine aldehyde: step 1/1. Multifunctional enzyme mediating important protective effects. Metabolizes betaine aldehyde to betaine, an important cellular osmolyte and methyl donor. Protects cells from oxidative stress by metabolizing a number of lipid peroxidation-derived aldehydes. Involved in lysine catabolism. This is Alpha-aminoadipic semialdehyde dehydrogenase from Rattus norvegicus (Rat).